Reading from the N-terminus, the 264-residue chain is Glutamate racemase (264 aa).

Substrate contacts are provided by residues 10-11 (DS) and 42-43 (YG). Cys73 functions as the Proton donor/acceptor in the catalytic mechanism. 74-75 (NT) serves as a coordination point for substrate. The active-site Proton donor/acceptor is Cys183. Residue 184 to 185 (TH) coordinates substrate.

It belongs to the aspartate/glutamate racemases family.

It catalyses the reaction L-glutamate = D-glutamate. Its pathway is cell wall biogenesis; peptidoglycan biosynthesis. Provides the (R)-glutamate required for cell wall biosynthesis. The polypeptide is Glutamate racemase (Streptococcus sanguinis (strain SK36)).